We begin with the raw amino-acid sequence, 368 residues long: Putative flavoprotein monooxygenase (368 aa).

Residues Ala14, Glu34, Ser41, 52–53, Val110, Ala307, and Ile319 contribute to the FAD site; that span reads IT.

The cofactor is FAD.

Its function is as follows. FAD-binding protein that may have monooxygenase activity using NADPH and/or NADH as an electron donor. This chain is Putative flavoprotein monooxygenase, found in Staphylococcus aureus (strain Mu50 / ATCC 700699).